Consider the following 375-residue polypeptide: N-acetyldiaminopimelate deacetylase (375 aa).

Aspartate 69 is an active-site residue. Glutamate 128 serves as the catalytic Proton acceptor.

The protein belongs to the peptidase M20A family. N-acetyldiaminopimelate deacetylase subfamily.

The catalysed reaction is N-acetyl-(2S,6S)-2,6-diaminopimelate + H2O = (2S,6S)-2,6-diaminopimelate + acetate. Its pathway is amino-acid biosynthesis; L-lysine biosynthesis via DAP pathway; LL-2,6-diaminopimelate from (S)-tetrahydrodipicolinate (acetylase route): step 3/3. Functionally, catalyzes the conversion of N-acetyl-diaminopimelate to diaminopimelate and acetate. This is N-acetyldiaminopimelate deacetylase from Streptococcus suis (strain 05ZYH33).